The sequence spans 325 residues: uncharacterized protein (325 aa).

The chain crosses the membrane as a helical span at residues 67 to 87 (WIPFFLLFSSVVVLGGLWWLG).

It is found in the membrane. This is an uncharacterized protein from Synechocystis sp. (strain ATCC 27184 / PCC 6803 / Kazusa).